The sequence spans 443 residues: ASTRA-associated protein 1 (443 aa).

WD repeat units lie at residues tyrosine 23–histidine 67, glutamate 71–isoleucine 110, histidine 258–threonine 295, and lysine 318–threonine 359. The tract at residues serine 372–serine 391 is disordered. Over residues threonine 378 to serine 391 the composition is skewed to low complexity.

This sequence belongs to the WD repeat ASA1 family. Component of the ASTRA chromatin remodeling machinery complex composed of at least RVB1, RVB2, TRA1, TEL2, TTI1 and TTI2.

The protein resides in the nucleus. In terms of biological role, component of the ASTRA complex involved in chromatin remodeling. The chain is ASTRA-associated protein 1 (ASA1) from Saccharomyces cerevisiae (strain RM11-1a) (Baker's yeast).